The sequence spans 277 residues: Putative serine/threonine-protein kinase PRKY (277 aa).

Positions 1-12 (MEAPGPAQAAAA) are enriched in low complexity. The interval 1–40 (MEAPGPAQAAAAESNSREVTEDAADWAPALCPSPEARSPE) is disordered. The 229-residue stretch at 49–277 (CDALVTMGTG…DFHVKTGRMM (229 aa)) folds into the Protein kinase domain. ATP contacts are provided by residues 55-63 (MGTGTFGRV) and Lys-78. The active-site Proton acceptor is Asp-172. Thr-203 carries the post-translational modification Phosphothreonine.

This sequence belongs to the protein kinase superfamily. AGC Ser/Thr protein kinase family. cAMP subfamily. In terms of tissue distribution, ubiquitous.

The enzyme catalyses L-seryl-[protein] + ATP = O-phospho-L-seryl-[protein] + ADP + H(+). It carries out the reaction L-threonyl-[protein] + ATP = O-phospho-L-threonyl-[protein] + ADP + H(+). This Homo sapiens (Human) protein is Putative serine/threonine-protein kinase PRKY (PRKY).